Reading from the N-terminus, the 836-residue chain is Glutamate receptor ionotropic, kainate glr-3 (836 aa).

A signal peptide spans 1–19; it reads MFWIAKTLIAFLILLKTDC. The Extracellular segment spans residues 20 to 523; that stretch reads YKIAIPANLI…WFKFMDPLST (504 aa). A disulfide bridge connects residues Cys-76 and Cys-320. Residues Asn-225, Asn-257, Asn-356, Asn-391, and Asn-419 are each glycosylated (N-linked (GlcNAc...) asparagine). Residues 478-480 and Arg-485 each bind L-glutamate; that span reads SLT. A helical membrane pass occupies residues 524–544; sequence QVWIMTFASYFVVSVAIWIIA. Residues 545–600 lie on the Cytoplasmic side of the membrane; that stretch reads KISPYEQFERDEDNGQYKPVDNQFSLRNSFWFTVCSLMQQGSELCPRAASTRLLTG. A helical transmembrane segment spans residues 601-621; it reads IWWFFALILISSYTANLAAVL. The Extracellular portion of the chain corresponds to 622–780; it reads TTRRMETPIE…KRKDQDDGES (159 aa). 651-652 serves as a coordination point for L-glutamate; the sequence is ST. Residue Asn-657 is glycosylated (N-linked (GlcNAc...) asparagine). Position 699 (Glu-699) interacts with L-glutamate. The helical transmembrane segment at 781-801 threads the bilayer; that stretch reads IGGIFIILVVGLVLTAVLVIF. The Cytoplasmic portion of the chain corresponds to 802–836; that stretch reads ELITTRKPSPAQSQVIRHVNVIPSFKLGFFRWNVN.

Belongs to the glutamate-gated ion channel (TC 1.A.10.1) family. Expressed in the intestine and in the ASER neuron. Also expressed in the thermosensitive RIA interneuron.

Its subcellular location is the cell membrane. The protein localises to the postsynaptic cell membrane. With respect to regulation, activated by low temperature of 18 degrees Celsius in ASER neuron. Functionally, ionotropic glutamate receptor. Activation by glutamate requires additional verification. L-glutamate acts as an excitatory neurotransmitter at many synapses in the central nervous system. Binding of the excitatory neurotransmitter L-glutamate induces a conformation change, leading to the opening of the cation channel, and thereby converts the chemical signal to an electrical impulse. The receptor then desensitizes rapidly and enters a transient inactive state, characterized by the presence of bound agonist. Independent of its ionotropic glutamate receptor activity, acts as a thermoreceptor in the ASER neuron where it triggers a calcium response to activate cold avoidance behavior in response to temperatures below 19 degrees Celsius. Possibly functions as a metabotropic cold receptor and acts upstream of the G(o) G protein goa-1 in the ASER neuron. Also functions in cold sensing in the intestine. The protein is Glutamate receptor ionotropic, kainate glr-3 of Caenorhabditis elegans.